Here is a 562-residue protein sequence, read N- to C-terminus: Formate--tetrahydrofolate ligase (562 aa).

77-84 lines the ATP pocket; it reads TPAGEGKS.

The protein belongs to the formate--tetrahydrofolate ligase family.

It catalyses the reaction (6S)-5,6,7,8-tetrahydrofolate + formate + ATP = (6R)-10-formyltetrahydrofolate + ADP + phosphate. Its pathway is one-carbon metabolism; tetrahydrofolate interconversion. This chain is Formate--tetrahydrofolate ligase, found in Corynebacterium jeikeium (strain K411).